Consider the following 265-residue polypeptide: Tryptophan synthase alpha chain (265 aa).

Catalysis depends on proton acceptor residues Glu-41 and Asp-52.

The protein belongs to the TrpA family. Tetramer of two alpha and two beta chains.

The enzyme catalyses (1S,2R)-1-C-(indol-3-yl)glycerol 3-phosphate + L-serine = D-glyceraldehyde 3-phosphate + L-tryptophan + H2O. It participates in amino-acid biosynthesis; L-tryptophan biosynthesis; L-tryptophan from chorismate: step 5/5. Its function is as follows. The alpha subunit is responsible for the aldol cleavage of indoleglycerol phosphate to indole and glyceraldehyde 3-phosphate. This Bacillus velezensis (strain DSM 23117 / BGSC 10A6 / LMG 26770 / FZB42) (Bacillus amyloliquefaciens subsp. plantarum) protein is Tryptophan synthase alpha chain.